The sequence spans 172 residues: Small ribosomal subunit protein uS5 (172 aa).

One can recognise an S5 DRBM domain in the interval 11–74; that stretch reads LSEVLVDVNR…QAAKKRMMKV (64 aa).

It belongs to the universal ribosomal protein uS5 family. As to quaternary structure, part of the 30S ribosomal subunit. Contacts proteins S4 and S8.

Its function is as follows. With S4 and S12 plays an important role in translational accuracy. Functionally, located at the back of the 30S subunit body where it stabilizes the conformation of the head with respect to the body. In Rickettsia canadensis (strain McKiel), this protein is Small ribosomal subunit protein uS5.